A 185-amino-acid chain; its full sequence is Ethylene-responsive transcription factor ERF017 (185 aa).

The segment at residues 11-68 is a DNA-binding region (AP2/ERF); that stretch reads KYKGVRKRKWGKWVSEIRLPNSRERIWLGSYDTPEKAARAFDAALYCLRGNNAKFNFP.

The protein belongs to the AP2/ERF transcription factor family. ERF subfamily.

Its subcellular location is the nucleus. Probably acts as a transcriptional activator. Binds to the GCC-box pathogenesis-related promoter element. May be involved in the regulation of gene expression by stress factors and by components of stress signal transduction pathways. The sequence is that of Ethylene-responsive transcription factor ERF017 (ERF017) from Arabidopsis thaliana (Mouse-ear cress).